Reading from the N-terminus, the 906-residue chain is MTDQNFSNLVPVNIEDEMKVSYLDYAMSVIVSRAIPDVRDGLKPVHRRIIYSMYEAGNHASKPYRKSARIVGDVMGKYHPHGDSAIYDSLVRMAQDFSLRLPLVDGQGNFGSMDGDAAAAMRYTESRMAKVSHKLVEDIDKETVSFNPNYDGSEEEPSVLPAMFPNLLVNGSGGIAVGMATNIPPHNLGEVIDACCLYIDNNDIEILDLLEVVKGPDFPTGSMILGISGIRSAYLTGRGSIIMRGRAEIENIGNSRQAIIITEIPYMVNKARLVEKIAEMVKEKRIEGISDLRDESNKNGVRIFIELKKDVVVEVVLNQIYACTQLQTSFGVIMLALKDGLPKVMNLKEVIAAFVSFREVVITNRTIYLLNKARDRAHILLGLTIAVSNIDEIIRIIKASNNPNAAKQELMARSWDALNILPLVKLVDDKAMLNEQGKCSFTEVQAKAILEMRLQRLTAMEKNKLEEDLKNLATEITEYLNILGSRTRLLEILKEELIKVKEEFATPRLTSIEFGEFDQDIEDLIQREEMVVTVTLGGYIKRVPLSSYRAQKRGGKGRSGLSMRDEDITTQVFVGSTHTPMLFFSNIGQVYSLKLYKLPLSNPQGKGRPMVNILPLKENEHITNIMPLPENQDEWDNLNIMFATAKGNIRRSDLLDFKKIQSNGKIAIRLDEDDKLIDVKPCKEDEHILLATKAGKALRFPVESLRVIKSRTSDGVRGMKLAKEDSVISMTVLKGISSTKEDRDAYLTVPWEKRLEIAKGEEFNLEELGVTLTADSILEMANSEEFILTVTENGFGKRSSAYGYRITDRGGSGIINMDINDKTGLVVGVMPVKMDDELMLITNSGKLIRCKLESVRITGRNTSGVILFKLDDGEKVVSVSLIAETSESEEDSELEEDLEQAEEVYT.

One can recognise a Topo IIA-type catalytic domain in the interval 35–524 (IPDVRDGLKP…GEFDQDIEDL (490 aa)). Y123 acts as the O-(5'-phospho-DNA)-tyrosine intermediate in catalysis. The short motif at 551–557 (QKRGGKG) is the GyrA-box element. The tract at residues 886–906 (SESEEDSELEEDLEQAEEVYT) is disordered.

This sequence belongs to the type II topoisomerase GyrA/ParC subunit family. As to quaternary structure, heterotetramer, composed of two GyrA and two GyrB chains. In the heterotetramer, GyrA contains the active site tyrosine that forms a transient covalent intermediate with DNA, while GyrB binds cofactors and catalyzes ATP hydrolysis.

Its subcellular location is the cytoplasm. The catalysed reaction is ATP-dependent breakage, passage and rejoining of double-stranded DNA.. In terms of biological role, a type II topoisomerase that negatively supercoils closed circular double-stranded (ds) DNA in an ATP-dependent manner to modulate DNA topology and maintain chromosomes in an underwound state. Negative supercoiling favors strand separation, and DNA replication, transcription, recombination and repair, all of which involve strand separation. Also able to catalyze the interconversion of other topological isomers of dsDNA rings, including catenanes and knotted rings. Type II topoisomerases break and join 2 DNA strands simultaneously in an ATP-dependent manner. The chain is DNA gyrase subunit A from Rickettsia felis (strain ATCC VR-1525 / URRWXCal2) (Rickettsia azadi).